The chain runs to 73 residues: UPF0346 protein SH1485 (73 aa).

The protein belongs to the UPF0346 family.

The protein is UPF0346 protein SH1485 of Staphylococcus haemolyticus (strain JCSC1435).